The following is a 458-amino-acid chain: Neuronal acetylcholine receptor subunit beta-3 (458 aa).

The first 21 residues, M1 to G21, serve as a signal peptide directing secretion. At F22–T237 the chain is on the extracellular side. 3 N-linked (GlcNAc...) asparagine glycosylation sites follow: N51, N138, and N166. C153 and C167 form a disulfide bridge. 3 consecutive transmembrane segments (helical) span residues L238–P258, L267–P287, and L300–V320. Residues H321 to R428 are Cytoplasmic-facing. Residues I429–A449 traverse the membrane as a helical segment.

This sequence belongs to the ligand-gated ion channel (TC 1.A.9) family. Acetylcholine receptor (TC 1.A.9.1) subfamily. Beta-3/CHRNB3 sub-subfamily. As to quaternary structure, neuronal AChR seems to be composed of two different type of subunits: alpha and beta. CHRNB3/beta-3 subunit is only able to form functional nAChRs when co-assembled with another beta subunit. Participates in pentameric assemblies along with CHRNA4/alpha-4 and CHRNB2/beta-2 subunits and with CHRNA6/alpha-6 as well, forming stoichiometries such as (CHRNA3:CHRNB4)2:CHRNB3, (CHRNA4:CHRNB2)2:CHRNB3 or (CHRNA6:CHRNB2)2:CHRNB3.

It is found in the synaptic cell membrane. The protein localises to the cell membrane. It carries out the reaction Ca(2+)(in) = Ca(2+)(out). It catalyses the reaction K(+)(in) = K(+)(out). The enzyme catalyses Na(+)(in) = Na(+)(out). Activated by a myriad of ligands such as acetylcholine, cytisine, nicotine, choline and epibatidine. Its function is as follows. Component of neuronal acetylcholine receptors (nAChRs) that function as pentameric, ligand-gated cation channels with high calcium permeability among other activities. nAChRs are excitatory neurotrasnmitter receptors formed by a collection of nAChR subunits known to mediate synaptic transmission in the nervous system and the neuromuscular junction. Each nAchR subunit confers differential attributes to channel properties, including activation, deactivation and desensitization kinetics, pH sensitivity, cation permeability, and binding to allosteric modulators. Has an accessory rather than functional role and is only able to form functional nAChRs when co-assembled with another beta subunit. Participates in pentameric assemblies along with CHRNA3, CHRNA4, CHRNA6, CHRNB2 and CHRNB4. Modulates receptor assembly and increases receptor sensitivity to nicotine when associated with CHRNB2, CHRNA4 and/or CHRNA6 as well as CHRNA3 and CHRNB4. Seems to play a role in nicotine addiction. This is Neuronal acetylcholine receptor subunit beta-3 from Homo sapiens (Human).